We begin with the raw amino-acid sequence, 525 residues long: MRKILVLIFCLNLFGVTQQAAAEENKTVDVVLIGGGIMSATLGTYLHELEPNWSIDMYERMNGVAEESSNGWNNAGTGHSAFAEMNYTPEKKDGSIDISKAVVVNESFEISRQFWSYQVKNNVLKDPKSFINSVPHMSFVWGDDNVNFLRKRYAALQHSTLFRGMEYSEDANQIKQWAPLVMDGRDPKQKIAATRMPLGTDVNFGVITHQLVDTLTKNPNFKLNLSHEVRDIKRNDDNTWRVTVADLTRDGKETTVNAKFVFIGAGGASLTLLQKTGIPEAEGYGAFPVGGQFLVTTNPEIANQHLAKVYGLASVGSPPMSVPHLDTRMLDGKRVLLFGPFATFSGKFLKNGSLFDLLHSLSTSNLMPMTHVGLDNFDLVKYLVGQLMMNDDDRFAALKEYFPEAKQADWKLWTAGQRVQIIKKDDEKGGLLQFGTEVVSAKDGSIAALLGASPGASTAAPIMLHLMETVFKDKVATPEWQSKLKEIIPSYGHKLNGDIEMTNKIRGYTSSVLQLDYIEVKPETN.

The protein belongs to the MQO family. It depends on FAD as a cofactor.

The enzyme catalyses (S)-malate + a quinone = a quinol + oxaloacetate. It functions in the pathway carbohydrate metabolism; tricarboxylic acid cycle; oxaloacetate from (S)-malate (quinone route): step 1/1. The protein is Probable malate:quinone oxidoreductase of Serratia proteamaculans (strain 568).